The chain runs to 264 residues: Thiazole synthase (264 aa).

Lys106 acts as the Schiff-base intermediate with DXP in catalysis. 1-deoxy-D-xylulose 5-phosphate-binding positions include Gly167, Ala193–Gly194, and Asn215–Ser216.

It belongs to the ThiG family. As to quaternary structure, homotetramer. Forms heterodimers with either ThiH or ThiS.

It localises to the cytoplasm. The catalysed reaction is [ThiS sulfur-carrier protein]-C-terminal-Gly-aminoethanethioate + 2-iminoacetate + 1-deoxy-D-xylulose 5-phosphate = [ThiS sulfur-carrier protein]-C-terminal Gly-Gly + 2-[(2R,5Z)-2-carboxy-4-methylthiazol-5(2H)-ylidene]ethyl phosphate + 2 H2O + H(+). Its pathway is cofactor biosynthesis; thiamine diphosphate biosynthesis. In terms of biological role, catalyzes the rearrangement of 1-deoxy-D-xylulose 5-phosphate (DXP) to produce the thiazole phosphate moiety of thiamine. Sulfur is provided by the thiocarboxylate moiety of the carrier protein ThiS. In vitro, sulfur can be provided by H(2)S. In Pseudomonas fluorescens (strain SBW25), this protein is Thiazole synthase.